We begin with the raw amino-acid sequence, 325 residues long: MTRWWAAVSDLSLRRRLRPALGLLPPGSGLLVAVSGGQDSLCLLKLLVDLAPERGLHLHVGHLDHRWRPGSERDAQRVAVLCNVWGVPFHLEIARTPPASEAAARAWRYCWLEQIARGLALERVVTGHTLSDRAETVLFNLLRGSGGAGLGSLDWERPLGGGVRLVRPLLGITRAETGAYCLAHHLPICIDESNANLTFRRNRIRLELMPYLREHFNPLVEQTLARTGDILHAESELLESLLDEHWHSLVQEGRLHRNTLAALPLALQRRAVRRWLSVGLGRQPNFEHIAAVLGCLSAPNRTRTSPLAHSLLVEVQGEWLGLVGG.

35-40 (SGGQDS) contacts ATP.

It belongs to the tRNA(Ile)-lysidine synthase family.

It localises to the cytoplasm. It carries out the reaction cytidine(34) in tRNA(Ile2) + L-lysine + ATP = lysidine(34) in tRNA(Ile2) + AMP + diphosphate + H(+). Its function is as follows. Ligates lysine onto the cytidine present at position 34 of the AUA codon-specific tRNA(Ile) that contains the anticodon CAU, in an ATP-dependent manner. Cytidine is converted to lysidine, thus changing the amino acid specificity of the tRNA from methionine to isoleucine. This is tRNA(Ile)-lysidine synthase from Gloeobacter violaceus (strain ATCC 29082 / PCC 7421).